The chain runs to 298 residues: ADP/ATP translocase 2 (298 aa).

Met1 bears the N-acetylmethionine mark. Residues 1–7 (MTDAAVS) lie on the Mitochondrial intermembrane side of the membrane. Thr2 bears the N-acetylthreonine; in ADP/ATP translocase 2, N-terminally processed mark. Residues 6 to 98 (VSFAKDFLAG…FAFKDKYKQI (93 aa)) form a Solcar 1 repeat. Ser7 is modified (phosphoserine). Residues 8 to 37 (FAKDFLAGGVAAAISKTAVAPIERVKLLLQ) traverse the membrane as a helical segment. Position 23 is an N6-malonyllysine (Lys23). The Mitochondrial matrix segment spans residues 38 to 74 (VQHASKQITADKQYKGIIDCVVRIPKEQGVLSFWRGN). Lys43 is modified (N6-succinyllysine). Lys52 carries the post-translational modification N6,N6,N6-trimethyllysine; alternate. Lys52 is modified (N6,N6-dimethyllysine; alternate). Lys52 is subject to N6-methyllysine; alternate. Residues 75–99 (LANVIRYFPTQALNFAFKDKYKQIF) form a helical membrane-spanning segment. ADP-binding residues include Arg80 and Lys92. N6-malonyllysine is present on residues Lys92 and Lys96. Residues 100-109 (LGGVDKRTQF) are Mitochondrial intermembrane-facing. Lys105 is modified (N6-acetyllysine; alternate). Lys105 is modified (N6-succinyllysine; alternate). A helical membrane pass occupies residues 110–130 (WRYFAGNLASGGAAGATSLCF). 2 Solcar repeats span residues 111–201 (RYFA…AKGM) and 212–297 (ISWM…IKKF). Residues 131-178 (VYPLDFARTRLAADVGKAGAEREFRGLGDCLVKIYKSDGIRGLYQGFN) lie on the Mitochondrial matrix side of the membrane. Lys147 carries the post-translational modification N6-methyllysine; alternate. Position 147 is an N6-acetyllysine; alternate (Lys147). Lys147 carries the post-translational modification N6-succinyllysine; alternate. Residue Lys147 is modified to N6-malonyllysine; alternate. An N6-acetyllysine mark is found at Lys163 and Lys166. A helical transmembrane segment spans residues 179-199 (VSVQGIIIYRAAYFGIYDTAK). At 200-210 (GMLPDPKNTHI) the chain is on the mitochondrial intermembrane side. Residues 211–231 (FISWMIAQSVTAVAGLTSYPF) form a helical membrane-spanning segment. Topologically, residues 232–273 (DTVRRRMMMQSGRKGTDIMYTGTLDCWRKIARDEGAKAFFKG) are mitochondrial matrix. Arg235 is an ADP binding site. An important for transport activity region spans residues 235 to 240 (RRRMMM). The short motif at 235 to 240 (RRRMMM) is the Nucleotide carrier signature motif element. Lys268 carries the N6-acetyllysine; alternate modification. An N6-succinyllysine; alternate modification is found at Lys268. The helical transmembrane segment at 274 to 291 (AWSNVLRGMGGAFVLVLY) threads the bilayer. Residues 292 to 298 (DEIKKFT) lie on the Mitochondrial intermembrane side of the membrane.

The protein belongs to the mitochondrial carrier (TC 2.A.29) family. In terms of assembly, monomer. Component of the MMXD complex, which includes CIAO1, ERCC2, CIAO2B, MMS19 and SLC25A5/ANT2. Interacts with AK4. Interacts with TIMM44; leading to inhibit the presequence translocase TIMM23, thereby promoting stabilization of PINK1. Post-translationally, trimethylated by ANTKMT at Lys-52.

The protein resides in the mitochondrion inner membrane. Its subcellular location is the membrane. The enzyme catalyses ADP(in) + ATP(out) = ADP(out) + ATP(in). The catalysed reaction is H(+)(in) = H(+)(out). Its activity is regulated as follows. The matrix-open state (m-state) is inhibited by the membrane-permeable bongkrekic acid (BKA). The cytoplasmic-open state (c-state) is inhibited by the membrane-impermeable toxic inhibitor carboxyatractyloside (CATR). Proton transporter activity is inhibited by ADP:ATP antiporter activity. Its function is as follows. ADP:ATP antiporter that mediates import of ADP into the mitochondrial matrix for ATP synthesis, and export of ATP out to fuel the cell. Cycles between the cytoplasmic-open state (c-state) and the matrix-open state (m-state): operates by the alternating access mechanism with a single substrate-binding site intermittently exposed to either the cytosolic (c-state) or matrix (m-state) side of the inner mitochondrial membrane. In addition to its ADP:ATP antiporter activity, also involved in mitochondrial uncoupling and mitochondrial permeability transition pore (mPTP) activity. Plays a role in mitochondrial uncoupling by acting as a proton transporter: proton transport uncouples the proton flows via the electron transport chain and ATP synthase to reduce the efficiency of ATP production and cause mitochondrial thermogenesis. Proton transporter activity is inhibited by ADP:ATP antiporter activity, suggesting that SLC25A5/ANT2 acts as a master regulator of mitochondrial energy output by maintaining a delicate balance between ATP production (ADP:ATP antiporter activity) and thermogenesis (proton transporter activity). Proton transporter activity requires free fatty acids as cofactor, but does not transport it. Probably mediates mitochondrial uncoupling in tissues that do not express UCP1. Also plays a key role in mPTP opening, a non-specific pore that enables free passage of the mitochondrial membranes to solutes of up to 1.5 kDa, and which contributes to cell death. It is however unclear if SLC25A5/ANT2 constitutes a pore-forming component of mPTP or regulates it. Acts as a regulator of mitophagy independently of ADP:ATP antiporter activity: promotes mitophagy via interaction with TIMM44, leading to inhibit the presequence translocase TIMM23, thereby promoting stabilization of PINK1. As part of the mitotic spindle-associated MMXD complex it may play a role in chromosome segregation. The protein is ADP/ATP translocase 2 of Bos taurus (Bovine).